A 168-amino-acid chain; its full sequence is Protein A40 (168 aa).

The Cytoplasmic segment spans residues 1–9; the sequence is MNKPKTDYA. Residues 10–30 traverse the membrane as a helical; Signal-anchor for type II membrane protein segment; the sequence is GYACCVICGLIVGIIFTATLL. At 31 to 168 the chain is on the extracellular side; that stretch reads KVVERKLVHT…TTFLSYHYFG (138 aa). The region spanning 63–168 is the C-type lectin domain; that stretch reads YNNKCIHLST…TTFLSYHYFG (106 aa).

The protein belongs to the poxviridae A40 protein family.

The protein localises to the host membrane. In Homo sapiens (Human), this protein is Protein A40.